The primary structure comprises 208 residues: Small ribosomal subunit protein uS5 (208 aa).

The S5 DRBM domain occupies leucine 28–valine 91.

The protein belongs to the universal ribosomal protein uS5 family. Part of the 30S ribosomal subunit. Contacts proteins S4 and S8.

With S4 and S12 plays an important role in translational accuracy. In terms of biological role, located at the back of the 30S subunit body where it stabilizes the conformation of the head with respect to the body. This chain is Small ribosomal subunit protein uS5, found in Aquifex aeolicus (strain VF5).